The chain runs to 86 residues: Evasin-3 (86 aa).

A signal peptide spans 1–20 (MRALLARLLLCVLVVSDSKG). Intrachain disulfides connect Cys42–Cys57, Cys46–Cys59, and Cys53–Cys70. A glycan (N-linked (GlcNAc...) asparagine) is linked at Asn45. Residue Asn76 is glycosylated (N-linked (GlcNAc...) asparagine).

Monomer.

It is found in the secreted. Salivary chemokine-binding protein which shows chemokine neutralizing activity and binds to host chemokines CXCL1, CXCL2, CXCL3, CXCL5, CXCL6 and CXCL8. Binds to CXCL8 with 1:1 stoichiometry. Disrupts CXCL8 homodimer formation, disrupts the glycosaminoglycan-binding site of CXCL8 and inhibits the interaction of CXCL8 with CXCR2. This Rhipicephalus sanguineus (Brown dog tick) protein is Evasin-3.